A 379-amino-acid chain; its full sequence is Serpin B5 (379 aa).

Asn133, Asn176, and Asn361 each carry an N-linked (GlcNAc...) asparagine glycan.

This sequence belongs to the serpin family. Ov-serpin subfamily.

The protein resides in the secreted. It localises to the extracellular space. Its function is as follows. May not exhibit serine protease inhibitory activity. The protein is Serpin B5 (serpinb5) of Xenopus tropicalis (Western clawed frog).